We begin with the raw amino-acid sequence, 254 residues long: Pectate lyase E (254 aa).

The first 17 residues, 1-17, serve as a signal peptide directing secretion; sequence MYQPLLLLPLLLTSAFA. The tract at residues 227–254 is disordered; sequence TNNNSKEPKKKSSGPSSYCKYSEPLSKC. N-linked (GlcNAc...) asparagine glycosylation occurs at Asn-229. Over residues 239–254 the composition is skewed to low complexity; it reads SGPSSYCKYSEPLSKC.

Belongs to the polysaccharide lyase 3 family. Requires Ca(2+) as cofactor.

The protein resides in the secreted. The catalysed reaction is Eliminative cleavage of (1-&gt;4)-alpha-D-galacturonan to give oligosaccharides with 4-deoxy-alpha-D-galact-4-enuronosyl groups at their non-reducing ends.. Its function is as follows. Pectinolytic enzyme consist of four classes of enzymes: pectin lyase, polygalacturonase, pectin methylesterase and rhamnogalacturonase. Among pectinolytic enzymes, pectin lyase is the most important in depolymerization of pectin, since it cleaves internal glycosidic bonds of highly methylated pectins. Favors pectate, the anion, over pectin, the methyl ester. The chain is Pectate lyase E (plyE) from Emericella nidulans (strain FGSC A4 / ATCC 38163 / CBS 112.46 / NRRL 194 / M139) (Aspergillus nidulans).